The chain runs to 291 residues: uncharacterized protein (291 aa).

The next 4 membrane-spanning stretches (helical) occupy residues 13-33, 84-104, 111-131, and 219-239; these read IILI…SITI, IVLF…IGII, LLHL…FIII, and LIYC…IYYL.

Its subcellular location is the cell membrane. This is an uncharacterized protein from Ureaplasma parvum serovar 3 (strain ATCC 700970).